A 200-amino-acid chain; its full sequence is Transcriptional repressor NrdR (200 aa).

A zinc finger lies at 3 to 34 (CPFCQNPDTKVIDTRISDDGHSIRRRRECPNC). Residues 46-136 (LLVKKRSGNV…VYQNFEDLED (91 aa)) form the ATP-cone domain.

It belongs to the NrdR family. Zn(2+) is required as a cofactor.

In terms of biological role, negatively regulates transcription of bacterial ribonucleotide reductase nrd genes and operons by binding to NrdR-boxes. The protein is Transcriptional repressor NrdR of Bifidobacterium animalis subsp. lactis (strain AD011).